The sequence spans 331 residues: Anthranilate phosphoribosyltransferase (331 aa).

5-phospho-alpha-D-ribose 1-diphosphate contacts are provided by residues Gly-79, 82–83, Thr-87, 89–92, 107–115, and Ala-119; these read GD, NIST, and KHGNYGATS. Anthranilate is bound at residue Gly-79. Ser-91 contributes to the Mg(2+) binding site. Asn-110 contributes to the anthranilate binding site. Arg-165 is a binding site for anthranilate. Asp-223 and Glu-224 together coordinate Mg(2+).

This sequence belongs to the anthranilate phosphoribosyltransferase family. In terms of assembly, homodimer. The cofactor is Mg(2+).

It catalyses the reaction N-(5-phospho-beta-D-ribosyl)anthranilate + diphosphate = 5-phospho-alpha-D-ribose 1-diphosphate + anthranilate. The protein operates within amino-acid biosynthesis; L-tryptophan biosynthesis; L-tryptophan from chorismate: step 2/5. In terms of biological role, catalyzes the transfer of the phosphoribosyl group of 5-phosphorylribose-1-pyrophosphate (PRPP) to anthranilate to yield N-(5'-phosphoribosyl)-anthranilate (PRA). This is Anthranilate phosphoribosyltransferase from Bacteroides fragilis (strain ATCC 25285 / DSM 2151 / CCUG 4856 / JCM 11019 / LMG 10263 / NCTC 9343 / Onslow / VPI 2553 / EN-2).